A 129-amino-acid chain; its full sequence is MARDKVRVKKKASKNIAAGVAHVNSSFNNTKILISDVQGNAISWSSAGTMGFKGSRKSTPYAAQMAAEDAGRKAQEHGVKTLEVEVQGPGSGRESALRALAAAGFNITSIRDVTPMAHNGCRPPKRRRV.

This sequence belongs to the universal ribosomal protein uS11 family. Part of the 30S ribosomal subunit. Interacts with proteins S7 and S18. Binds to IF-3.

Functionally, located on the platform of the 30S subunit, it bridges several disparate RNA helices of the 16S rRNA. Forms part of the Shine-Dalgarno cleft in the 70S ribosome. In Roseobacter denitrificans (strain ATCC 33942 / OCh 114) (Erythrobacter sp. (strain OCh 114)), this protein is Small ribosomal subunit protein uS11.